Consider the following 878-residue polypeptide: Phosphoenolpyruvate carboxylase (878 aa).

Catalysis depends on residues H140 and K545.

It belongs to the PEPCase type 1 family. It depends on Mg(2+) as a cofactor.

It catalyses the reaction oxaloacetate + phosphate = phosphoenolpyruvate + hydrogencarbonate. In terms of biological role, forms oxaloacetate, a four-carbon dicarboxylic acid source for the tricarboxylic acid cycle. The chain is Phosphoenolpyruvate carboxylase from Pseudomonas syringae pv. syringae (strain B728a).